The sequence spans 165 residues: Transcriptional repressor NrdR (165 aa).

The segment at 3–34 (CPFCGAQDTRVVDSRLSHEGDQVRRRRECGEC) is a zinc-finger region. Positions 49 to 139 (PRVVKSDGSR…VYRRFEDVNQ (91 aa)) constitute an ATP-cone domain.

The protein belongs to the NrdR family. Zn(2+) serves as cofactor.

Negatively regulates transcription of bacterial ribonucleotide reductase nrd genes and operons by binding to NrdR-boxes. The polypeptide is Transcriptional repressor NrdR (Methylococcus capsulatus (strain ATCC 33009 / NCIMB 11132 / Bath)).